Consider the following 883-residue polypeptide: Sodium/sulfate cotransporter 2 (883 aa).

6 consecutive transmembrane segments (helical) span residues 3–23 (FGWQ…VMAA), 30–50 (VTFT…VTVA), 60–80 (GLLT…TGGL), 106–126 (MCLS…PILI), 139–159 (LLIP…IGTS), and 185–205 (IFDI…FILL). 4 RCK C-terminal domains span residues 211–295 (LPGN…EFGL), 317–401 (VFTP…SKNN), 406–491 (VRAV…FPGL), and 497–583 (EQVD…DKSF). Transmembrane regions (helical) follow at residues 600–620 (MVIG…GGLK), 624–644 (YIHL…TGCM), 657–677 (VYLT…TGVA), 693–713 (SDGA…ELLT), 774–794 (FAII…FILC), and 802–822 (VWIV…LYFL). Positions 857 to 883 (QASRTGSDGTGSSDSPRALGVPKVITA) are disordered. Residues 861–871 (TGSDGTGSSDS) are compositionally biased toward low complexity.

The protein belongs to the divalent anion:Na+ symporter (DASS) superfamily. Na+/sulfate symporter (TC 2.A.47.4) family.

The protein localises to the cell membrane. In terms of biological role, na(+)/sulfate cotransporter with a probable high-affinity for sulfate and a proteasome dependent turnover. The polypeptide is Sodium/sulfate cotransporter 2 (SLT2) (Chlamydomonas reinhardtii (Chlamydomonas smithii)).